The sequence spans 161 residues: Interleukin-17F (161 aa).

Positions Met1–Ala28 are cleaved as a signal peptide. An N-linked (GlcNAc...) asparagine glycan is attached at Asn83. 2 cysteine pairs are disulfide-bonded: Cys100–Cys150 and Cys105–Cys152.

The protein belongs to the IL-17 family. In terms of assembly, homodimer; disulfide-linked. Heterodimer with IL17A (IL17A-IL17F). Forms complexes with IL17RA and IL17RC receptors with 2:1 binding stoichiometry: two receptor chains for one interleukin molecule. IL17F homodimer forms predominantly complexes with IL17RC homodimer, whereas IL17A-IL17F favors complexes with IL17RA-IL17RC. IL17RA and IL17RC chains cannot distinguish between IL17A and IL17F molecules, potentially enabling the formation of topologically distinct complexes. Expressed by T-helper 17 cells (Th17) (at protein level). The expression pattern reflects the differentiation state. In fully differentiated Th17 cells, IL17A-IL17F heterodimers are produced at higher levels than IL17A-IL17A and IL17F-IL17F dimers. Dominantly secreted in intestine. Expressed by resident cells of the lamina propria, both epithelial cells and immune cell subsets including natural killer cells, dendritic cells, macrophages and various T and B cell subsets. Expressed by epithelial cells and innate immune cells in the colon. Expressed in group 3 innate lymphoid cells.

The protein localises to the secreted. Functionally, effector cytokine of innate and adaptive immune system involved in antimicrobial host defense and maintenance of tissue integrity. IL17A-IL17F signals via IL17RA-IL17RC heterodimeric receptor complex, triggering homotypic interaction of IL17RA and IL17RC chains with TRAF3IP2 adapter through SEFIR domains. This leads to downstream TRAF6-mediated activation of NF-kappa-B and MAPkinase pathways ultimately resulting in transcriptional activation of cytokines, chemokines, antimicrobial peptides and matrix metalloproteinases, with potential strong immune inflammation. IL17A-IL17F is primarily involved in host defense against extracellular bacteria and fungi by inducing neutrophilic inflammation. As signature effector cytokine of T-helper 17 cells (Th17), primarily induces neutrophil activation and recruitment at infection and inflammatory sites. Stimulates the production of antimicrobial beta-defensins DEFB1, DEFB103A, and DEFB104A by mucosal epithelial cells, limiting the entry of microbes through the epithelial barriers. IL17F homodimer can signal via IL17RC homodimeric receptor complex, triggering downstream activation of TRAF6 and NF-kappa-B signaling pathway. Via IL17RC induces transcriptional activation of IL33, a potent cytokine that stimulates group 2 innate lymphoid cells and adaptive T-helper 2 cells involved in pulmonary allergic response to fungi. Likely via IL17RC, promotes sympathetic innervation of peripheral organs by coordinating the communication between gamma-delta T cells and parenchymal cells. Stimulates sympathetic innervation of thermogenic adipose tissue by driving TGFB1 expression. Regulates the composition of intestinal microbiota and immune tolerance by inducing antimicrobial proteins that specifically control the growth of commensal Firmicutes and Bacteroidetes. In Mus musculus (Mouse), this protein is Interleukin-17F (Il17f).